Consider the following 335-residue polypeptide: MKRIAIDAMGGDNAPKAIVEGVNQVIEAFSDIEIQLYGDQTKINSYLIQSDRVAIIHTDEKIMSDDEPAKAVRRKKKASMVLAAKAVKEGKADAIISAGNTGALLAVGLFVVGRIKGVDRPGLLSTIPTVTGLGFDMLDLGANAENTVKHLHQYAILGSFYAKNVRGIANPRVGLLNNGTEETKGDPLRKATYELLTADNTISFVGNVEARELMSGVADVIVSDGFTGNAVLKSIEGTGISIMGQLKQIINSGGIKTKIGASLLKSSLYEMKKTLDYSSAGGAVLFGLKAPVVKSHGSSDVKAIFSTIKQVRTMLDTNVVGQLVEEFAKETQVND.

The protein belongs to the PlsX family. As to quaternary structure, homodimer. Probably interacts with PlsY.

It is found in the cytoplasm. It catalyses the reaction a fatty acyl-[ACP] + phosphate = an acyl phosphate + holo-[ACP]. Its pathway is lipid metabolism; phospholipid metabolism. Catalyzes the reversible formation of acyl-phosphate (acyl-PO(4)) from acyl-[acyl-carrier-protein] (acyl-ACP). This enzyme utilizes acyl-ACP as fatty acyl donor, but not acyl-CoA. In Streptococcus pyogenes serotype M6 (strain ATCC BAA-946 / MGAS10394), this protein is Phosphate acyltransferase.